Consider the following 131-residue polypeptide: UPF0102 protein YraN (131 aa).

Belongs to the UPF0102 family.

This chain is UPF0102 protein YraN, found in Salmonella agona (strain SL483).